The chain runs to 299 residues: Circadian clock oscillator protein KaiA (299 aa).

One can recognise a KaiA N-terminal domain in the interval 1-169; it reads MVSKLSLYLV…RLAEKLRERL (169 aa). A psR domain, binds oxidized quinones region spans residues 3–135; it reads SKLSLYLVTP…LHLAPSCALS (133 aa). Residues 170–178 form a flexible linker region; the sequence is GYLGVYYKR. The region spanning 179–287 is the KaiA C-terminal domain; sequence NPKYFYRSLS…CEMYRRSIPR (109 aa).

Homodimer. The KaiABC complex composition changes during the circadian cycle to control KaiC phosphorylation. Complexes KaiC(6), KaiA(2-4):KaiC(6), KaiB(6):KaiC(6) and KaiC(6):KaiB(6):KaiA(12) are among the most important forms, many form cooperatively. KaiA and CikA bind to the same region of the KaiB(fs) form and therefore compete.

Functionally, key component of the KaiABC oscillator complex, which constitutes the main circadian regulator in cyanobacteria. Complex composition changes during the circadian cycle to control KaiC phosphorylation. KaiA stimulates KaiC autophosphorylation, while KaiB sequesters KaiA, leading to KaiC autodephosphorylation. KaiA binding to the KaiC CII domain during the subjective day yields KaiA(2-4):KaiC(6) complexes which stimulate KaiC autophosphorylation. Phospho-Ser-431 KaiC accumulation triggers binding of KaiB during the subjective night to form the KaiB(6):KaiC(6) complex, leading to changes in the output regulators CikA and SasA. KaiB(6):KaiC(6) formation exposes a site for KaiA binding on KaiB that sequesters KaiA from KaiC's CII domain, making the KaiC(6):KaiB(6):KaiA(12) complex resulting in KaiC autodephosphorylation. Complete dephosphorylation of KaiC leads to dissociation of KaiA(2):KaiB(1), completing 1 cycle of the Kai oscillator. Its function is as follows. Binds oxidized quinones via the N-terminal PsR domain, allowing it to sense redox changes and possibly mediate clock input. The polypeptide is Circadian clock oscillator protein KaiA (Picosynechococcus sp. (strain ATCC 27264 / PCC 7002 / PR-6) (Agmenellum quadruplicatum)).